We begin with the raw amino-acid sequence, 219 residues long: Dynein light chain Tctex-type 4 (219 aa).

A disordered region spans residues 1–84 (MAGRPVPAGR…RRPSLGPVPP (84 aa)). A compositionally biased stretch (basic and acidic residues) spans 10–20 (RQEEELAKDPG). At S64 the chain carries Phosphoserine.

This sequence belongs to the dynein light chain Tctex-type family. In terms of assembly, interacts with ENG/endoglin, TGFBR2 and TGFBR3. Interacts with PPP1CC.

It is found in the cell projection. Its subcellular location is the cilium. It localises to the flagellum. The protein localises to the cytoplasmic vesicle. The protein resides in the secretory vesicle. It is found in the acrosome. Its subcellular location is the cytoplasm. It localises to the cytoskeleton. The protein localises to the cilium axoneme. The protein resides in the nucleus. It is found in the microtubule organizing center. The chain is Dynein light chain Tctex-type 4 (DYNLT4) from Sus scrofa (Pig).